A 113-amino-acid chain; its full sequence is Large ribosomal subunit protein uL22 (113 aa).

This sequence belongs to the universal ribosomal protein uL22 family. As to quaternary structure, part of the 50S ribosomal subunit.

Functionally, this protein binds specifically to 23S rRNA; its binding is stimulated by other ribosomal proteins, e.g. L4, L17, and L20. It is important during the early stages of 50S assembly. It makes multiple contacts with different domains of the 23S rRNA in the assembled 50S subunit and ribosome. The globular domain of the protein is located near the polypeptide exit tunnel on the outside of the subunit, while an extended beta-hairpin is found that lines the wall of the exit tunnel in the center of the 70S ribosome. This Herpetosiphon aurantiacus (strain ATCC 23779 / DSM 785 / 114-95) protein is Large ribosomal subunit protein uL22.